A 299-amino-acid polypeptide reads, in one-letter code: Protease HtpX homolog (299 aa).

The next 2 helical transmembrane spans lie at Ile15–Phe35 and Gly39–Phe59. His143 provides a ligand contact to Zn(2+). Glu144 is a catalytic residue. His147 contributes to the Zn(2+) binding site. Transmembrane regions (helical) follow at residues Ile158–Trp178 and Ile198–Val218. Glu227 serves as a coordination point for Zn(2+).

It belongs to the peptidase M48B family. It depends on Zn(2+) as a cofactor.

The protein resides in the cell membrane. The sequence is that of Protease HtpX homolog from Streptococcus pneumoniae serotype 19F (strain G54).